The primary structure comprises 132 residues: Acyl-CoA thioester hydrolase YciA (132 aa).

In terms of domain architecture, HotDog ACOT-type spans 8–123 (PQGDLVLRTL…LFKYVAVDPE (116 aa)).

The protein belongs to the acyl coenzyme A hydrolase family.

Functionally, catalyzes the hydrolysis of the thioester bond in palmitoyl-CoA and malonyl-CoA. In Escherichia coli O6:H1 (strain CFT073 / ATCC 700928 / UPEC), this protein is Acyl-CoA thioester hydrolase YciA (yciA).